The chain runs to 542 residues: Ribonuclease Y (542 aa).

Residues 1 to 21 (MLIALIAVSVLAVAAIIGSLA) traverse the membrane as a helical segment. The disordered stretch occupies residues 52–92 (SRASQDLADSRKDVAKARAELESSRTRASDEARRADNADQA). Residues 59 to 92 (ADSRKDVAKARAELESSRTRASDEARRADNADQA) are compositionally biased toward basic and acidic residues. A KH domain is found at 229–289 (VVSVVPLPSN…MRREVARQAL (61 aa)). The HD domain occupies 355-449 (VLDHCVECAR…VKAADAISAA (95 aa)).

This sequence belongs to the RNase Y family.

Its subcellular location is the cell membrane. Its function is as follows. Endoribonuclease that initiates mRNA decay. This is Ribonuclease Y from Cutibacterium acnes (strain DSM 16379 / KPA171202) (Propionibacterium acnes).